The sequence spans 256 residues: Doublecortin domain-containing protein (256 aa).

The interval 71–103 (NVFERLTDTAYYTGSHRERFDEFGNGRGIAGRE) is partial p25alpha domain. The Doublecortin domain maps to 152–226 (RLMWLYRNGD…AKYLCTSGEP (75 aa)).

It localises to the cytoplasm. It is found in the cytoskeleton. In terms of biological role, specifically required in the formation and maintenance of the conoid fibers; the conoid is a component of the cytoskeletal apical complex, which is composed of a left-handed spiral of 14 fibers made from a nontubular tubulin polymer. Promotes the organization, curvature, and stability of the conoid fibers, and probably bridges other conoid components to the tubulin core. The polypeptide is Doublecortin domain-containing protein (Toxoplasma gondii (strain ATCC 50861 / VEG)).